Reading from the N-terminus, the 478-residue chain is Glutamate--tRNA ligase (478 aa).

The short motif at 9–19 (PSPTGLLHIGT) is the 'HIGH' region element. Residues 248–252 (KLSKR) carry the 'KMSKS' region motif. Lysine 251 serves as a coordination point for ATP.

It belongs to the class-I aminoacyl-tRNA synthetase family. Glutamate--tRNA ligase type 1 subfamily. In terms of assembly, monomer.

The protein resides in the cytoplasm. The enzyme catalyses tRNA(Glu) + L-glutamate + ATP = L-glutamyl-tRNA(Glu) + AMP + diphosphate. Catalyzes the attachment of glutamate to tRNA(Glu) in a two-step reaction: glutamate is first activated by ATP to form Glu-AMP and then transferred to the acceptor end of tRNA(Glu). The protein is Glutamate--tRNA ligase of Prochlorococcus marinus subsp. pastoris (strain CCMP1986 / NIES-2087 / MED4).